The following is a 691-amino-acid chain: Elongation factor G (691 aa).

The region spanning 8 to 282 (ERVRNIGIAA…AVVDYLPAPI (275 aa)) is the tr-type G domain. Residues 17-24 (AHIDAGKT), 81-85 (DTPGH), and 135-138 (NKMD) contribute to the GTP site.

This sequence belongs to the TRAFAC class translation factor GTPase superfamily. Classic translation factor GTPase family. EF-G/EF-2 subfamily.

It localises to the cytoplasm. In terms of biological role, catalyzes the GTP-dependent ribosomal translocation step during translation elongation. During this step, the ribosome changes from the pre-translocational (PRE) to the post-translocational (POST) state as the newly formed A-site-bound peptidyl-tRNA and P-site-bound deacylated tRNA move to the P and E sites, respectively. Catalyzes the coordinated movement of the two tRNA molecules, the mRNA and conformational changes in the ribosome. The protein is Elongation factor G of Prochlorococcus marinus subsp. pastoris (strain CCMP1986 / NIES-2087 / MED4).